A 1402-amino-acid polypeptide reads, in one-letter code: Defective in tip formation protein A (1402 aa).

Disordered stretches follow at residues 1-20 (MKDI…PPQI), 37-94 (NVTT…PQIV), 109-133 (NTPS…DNDI), and 210-292 (KQSS…RRLK). Repeat copies occupy residues 12-18 (TTTVAPP) and 40-46 (TTTVQPP). Positions 12 to 92 (TTTVAPPQIN…TTTTTVQPPQ (81 aa)) are 4 X 7 AA repeat of T-T-T-[IV]-[AQ]-P-P. Low complexity predominate over residues 38-47 (VTTTTVQPPQ). The segment covering 48–58 (IVSPPSPPSPP) has biased composition (pro residues). The segment covering 59-94 (QTTTIAPPTILPTTKTTTTTTTTTTTTTTVQPPQIV) has biased composition (low complexity). A run of 2 repeats spans residues 60 to 66 (TTTIAPP) and 86 to 92 (TTVQPPQ). Over residues 210–234 (KQSSQSQLQQQLSSQSLQQIQQKSK) the composition is skewed to low complexity. A compositionally biased stretch (pro residues) spans 235-253 (QPPPQQQQQQQPPPPPIPL). Residues 254 to 279 (LPQIHQQLKPKQQQEQQQQQEQQQQQ) show a composition bias toward low complexity. A coiled-coil region spans residues 350-383 (QRIKSFIENHKKKKQKYREYQSEKNQQQKSNSKK). Disordered regions lie at residues 429–453 (DQQQ…SPMT) and 712–745 (NNNN…NLSN). Low complexity predominate over residues 430 to 453 (QQQQQQQQQQSTMTTTSSSSSPMT).

Its subcellular location is the cell surface. Required for correct organization of the actin cytoskeleton and cytokinesis. Also required for apical sorting of prestalk cells, a prerequisite for formation of the tip at the mound stage and subsequent formation of the fruiting body. May be required for cell adhesion. The protein is Defective in tip formation protein A (dtfA) of Dictyostelium discoideum (Social amoeba).